Consider the following 424-residue polypeptide: Putative pachytene checkpoint protein 2 (424 aa).

ATP is bound at residue 179–186 (GPPGTGKT).

This sequence belongs to the AAA ATPase family. PCH2 subfamily.

Plays a key role in chromosome recombination during meiosis. In Caenorhabditis elegans, this protein is Putative pachytene checkpoint protein 2 (pch-2).